Consider the following 252-residue polypeptide: Flavin-dependent thymidylate synthase (252 aa).

In terms of domain architecture, ThyX spans 7–235 (LDVQLVACST…PTVFSDFETS (229 aa)). Residues 94–97 (ELVR), 105–109 (QLSQR), and arginine 174 each bind dUMP. FAD contacts are provided by residues 97-99 (RHR) and glutamine 105. Positions 97 to 107 (RHRHFSFSQLS) match the ThyX motif motif. FAD is bound by residues 190–192 (NFR) and histidine 196. Arginine 201 is a dUMP binding site. Arginine 201 functions as the Involved in ionization of N3 of dUMP, leading to its activation in the catalytic mechanism.

This sequence belongs to the thymidylate synthase ThyX family. As to quaternary structure, homotetramer. FAD serves as cofactor.

The enzyme catalyses dUMP + (6R)-5,10-methylene-5,6,7,8-tetrahydrofolate + NADPH + H(+) = dTMP + (6S)-5,6,7,8-tetrahydrofolate + NADP(+). Its pathway is pyrimidine metabolism; dTTP biosynthesis. In terms of biological role, catalyzes the reductive methylation of 2'-deoxyuridine-5'-monophosphate (dUMP) to 2'-deoxythymidine-5'-monophosphate (dTMP) while utilizing 5,10-methylenetetrahydrofolate (mTHF) as the methyl donor, and NADPH and FADH(2) as the reductant. This chain is Flavin-dependent thymidylate synthase, found in Corynebacterium diphtheriae (strain ATCC 700971 / NCTC 13129 / Biotype gravis).